Consider the following 727-residue polypeptide: 1,4-alpha-glucan branching enzyme GlgB (727 aa).

Asp411 (nucleophile) is an active-site residue. Catalysis depends on Glu464, which acts as the Proton donor.

The protein belongs to the glycosyl hydrolase 13 family. GlgB subfamily. As to quaternary structure, monomer.

It carries out the reaction Transfers a segment of a (1-&gt;4)-alpha-D-glucan chain to a primary hydroxy group in a similar glucan chain.. The protein operates within glycan biosynthesis; glycogen biosynthesis. Catalyzes the formation of the alpha-1,6-glucosidic linkages in glycogen by scission of a 1,4-alpha-linked oligosaccharide from growing alpha-1,4-glucan chains and the subsequent attachment of the oligosaccharide to the alpha-1,6 position. In Protochlamydia amoebophila (strain UWE25), this protein is 1,4-alpha-glucan branching enzyme GlgB.